The primary structure comprises 92 residues: C-C motif chemokine 4 (92 aa).

The N-terminal stretch at 1–23 (MKLCVTVLSLLVLAAAFCSPALS) is a signal peptide. Disulfide bonds link C34-C58 and C35-C74.

The protein belongs to the intercrine beta (chemokine CC) family. As to quaternary structure, homodimer. Interacts with CCR5. As to expression, detected in peripheral blood mononuclear cells and lymph nodes.

Its subcellular location is the secreted. Monokine with inflammatory and chemokinetic properties. This Macaca mulatta (Rhesus macaque) protein is C-C motif chemokine 4 (CCL4).